A 415-amino-acid chain; its full sequence is 4-hydroxy-3-methylbut-2-enyl diphosphate reductase (415 aa).

Cys66 provides a ligand contact to [4Fe-4S] cluster. His96 contributes to the (2E)-4-hydroxy-3-methylbut-2-enyl diphosphate binding site. His96 serves as a coordination point for dimethylallyl diphosphate. An isopentenyl diphosphate-binding site is contributed by His96. Cys158 is a binding site for [4Fe-4S] cluster. A (2E)-4-hydroxy-3-methylbut-2-enyl diphosphate-binding site is contributed by His186. A dimethylallyl diphosphate-binding site is contributed by His186. Position 186 (His186) interacts with isopentenyl diphosphate. Glu188 functions as the Proton donor in the catalytic mechanism. Thr259 is a (2E)-4-hydroxy-3-methylbut-2-enyl diphosphate binding site. Cys297 contributes to the [4Fe-4S] cluster binding site. Residues Ser326, Ser327, Asn328, and Ser388 each contribute to the (2E)-4-hydroxy-3-methylbut-2-enyl diphosphate site. Residues Ser326, Ser327, Asn328, and Ser388 each contribute to the dimethylallyl diphosphate site. 4 residues coordinate isopentenyl diphosphate: Ser326, Ser327, Asn328, and Ser388.

The protein belongs to the IspH family. It depends on [4Fe-4S] cluster as a cofactor.

The catalysed reaction is isopentenyl diphosphate + 2 oxidized [2Fe-2S]-[ferredoxin] + H2O = (2E)-4-hydroxy-3-methylbut-2-enyl diphosphate + 2 reduced [2Fe-2S]-[ferredoxin] + 2 H(+). It catalyses the reaction dimethylallyl diphosphate + 2 oxidized [2Fe-2S]-[ferredoxin] + H2O = (2E)-4-hydroxy-3-methylbut-2-enyl diphosphate + 2 reduced [2Fe-2S]-[ferredoxin] + 2 H(+). It functions in the pathway isoprenoid biosynthesis; dimethylallyl diphosphate biosynthesis; dimethylallyl diphosphate from (2E)-4-hydroxy-3-methylbutenyl diphosphate: step 1/1. The protein operates within isoprenoid biosynthesis; isopentenyl diphosphate biosynthesis via DXP pathway; isopentenyl diphosphate from 1-deoxy-D-xylulose 5-phosphate: step 6/6. Its function is as follows. Catalyzes the conversion of 1-hydroxy-2-methyl-2-(E)-butenyl 4-diphosphate (HMBPP) into a mixture of isopentenyl diphosphate (IPP) and dimethylallyl diphosphate (DMAPP). Acts in the terminal step of the DOXP/MEP pathway for isoprenoid precursor biosynthesis. In Acaryochloris marina (strain MBIC 11017), this protein is 4-hydroxy-3-methylbut-2-enyl diphosphate reductase.